A 204-amino-acid polypeptide reads, in one-letter code: uncharacterized protein (204 aa).

This is an uncharacterized protein from Dictyostelium discoideum (Social amoeba).